We begin with the raw amino-acid sequence, 197 residues long: Thymidylate kinase (197 aa).

7–14 (GIDGCGKS) contributes to the ATP binding site.

Belongs to the thymidylate kinase family.

The catalysed reaction is dTMP + ATP = dTDP + ADP. Functionally, phosphorylation of dTMP to form dTDP in both de novo and salvage pathways of dTTP synthesis. The chain is Thymidylate kinase from Fervidobacterium nodosum (strain ATCC 35602 / DSM 5306 / Rt17-B1).